A 77-amino-acid chain; its full sequence is Acyl carrier protein (77 aa).

The region spanning Ser-2–Gly-77 is the Carrier domain. Ser-37 carries the O-(pantetheine 4'-phosphoryl)serine modification.

This sequence belongs to the acyl carrier protein (ACP) family. In terms of processing, 4'-phosphopantetheine is transferred from CoA to a specific serine of apo-ACP by AcpS. This modification is essential for activity because fatty acids are bound in thioester linkage to the sulfhydryl of the prosthetic group.

It is found in the cytoplasm. It participates in lipid metabolism; fatty acid biosynthesis. In terms of biological role, carrier of the growing fatty acid chain in fatty acid biosynthesis. The sequence is that of Acyl carrier protein from Psychromonas ingrahamii (strain DSM 17664 / CCUG 51855 / 37).